A 499-amino-acid polypeptide reads, in one-letter code: MAKDHAGGPEDLERLVRDLIAEVLEAYPAKAQKKRAKHLSVAGATSEDADASRHRVEMRHVKSNIKSVPGVLTIRGCAYAGSKGVVWGPIKDMVHISHGPVGCGTYSWSQRRNYYTGKTGVDSFVTMQFTTDFQEKDIVFGGDKKLEKTIDEINELFPLSKGITIQSECPIGLIGDDIEAVSKKKNKEINKTIVPVRCEGFRGVSQSLGHHIANDAVRDWIFEQPESEATKAFEPGPYDVNIIGDYNIGGDAWASPILLEEIGLNVIWSGDATLAEMERAPKAKLNLIHCYRSMNYICRYMEEKYSIGWMEYNFFGPTQIEASLRIGKFDETIQANVEKVIAKYRPLVDGILAKYKPRLEGKSVMLYVRPRSAPRRHAYDDLGMVIAGTGYEFAHNDDYKRTGHYVKEGTIYDDVTGYELEKFIEKIRPDLVASGIKEEKYPVQKMGIPFRQMHSWDYSGPYHGYWASPILLDAPWDKPHRASSWKITPAAPWKAASEA.

Residues cysteine 77, cysteine 103, and cysteine 169 each coordinate [8Fe-7S] cluster. The [7Fe-Mo-9S-C-homocitryl] cluster site is built by cysteine 290 and histidine 454.

It belongs to the NifD/NifK/NifE/NifN family. Tetramer of two alpha and two beta chains. Forms complex with the iron protein (nitrogenase component 2). [8Fe-7S] cluster is required as a cofactor. [7Fe-Mo-9S-C-homocitryl] cluster serves as cofactor.

It carries out the reaction N2 + 8 reduced [2Fe-2S]-[ferredoxin] + 16 ATP + 16 H2O = H2 + 8 oxidized [2Fe-2S]-[ferredoxin] + 2 NH4(+) + 16 ADP + 16 phosphate + 6 H(+). Its function is as follows. This molybdenum-iron protein is part of the nitrogenase complex that catalyzes the key enzymatic reactions in nitrogen fixation. The polypeptide is Nitrogenase molybdenum-iron protein alpha chain (nifD) (Rhodobacter capsulatus (Rhodopseudomonas capsulata)).